A 534-amino-acid polypeptide reads, in one-letter code: CTP synthase (534 aa).

An amidoligase domain region spans residues 1–265 (MKYIIVTGGV…TTQLMKHLQL (265 aa)). Residue S12 participates in CTP binding. S12 is a binding site for UTP. Position 13–18 (13–18 (GLGKGI)) interacts with ATP. Y53 is an L-glutamine binding site. Residue D70 coordinates ATP. The Mg(2+) site is built by D70 and E140. CTP is bound by residues 147–149 (DIE), 186–191 (KTKPSQ), and K222. UTP-binding positions include 186 to 191 (KTKPSQ) and K222. The 242-residue stretch at 289–530 (KLAIVGKYTN…VAAMCKYRKE (242 aa)) folds into the Glutamine amidotransferase type-1 domain. G352 provides a ligand contact to L-glutamine. The Nucleophile; for glutamine hydrolysis role is filled by C379. Residues 380 to 383 (LGMQ), E403, and R460 contribute to the L-glutamine site. Active-site residues include H503 and E505.

Belongs to the CTP synthase family. In terms of assembly, homotetramer.

It catalyses the reaction UTP + L-glutamine + ATP + H2O = CTP + L-glutamate + ADP + phosphate + 2 H(+). It carries out the reaction L-glutamine + H2O = L-glutamate + NH4(+). The catalysed reaction is UTP + NH4(+) + ATP = CTP + ADP + phosphate + 2 H(+). It participates in pyrimidine metabolism; CTP biosynthesis via de novo pathway; CTP from UDP: step 2/2. Allosterically activated by GTP, when glutamine is the substrate; GTP has no effect on the reaction when ammonia is the substrate. The allosteric effector GTP functions by stabilizing the protein conformation that binds the tetrahedral intermediate(s) formed during glutamine hydrolysis. Inhibited by the product CTP, via allosteric rather than competitive inhibition. Functionally, catalyzes the ATP-dependent amination of UTP to CTP with either L-glutamine or ammonia as the source of nitrogen. Regulates intracellular CTP levels through interactions with the four ribonucleotide triphosphates. The protein is CTP synthase of Methanosarcina barkeri (strain Fusaro / DSM 804).